The sequence spans 200 residues: Dephospho-CoA kinase (200 aa).

One can recognise a DPCK domain in the interval Thr-4–Lys-200. Ala-12–Thr-17 contacts ATP.

The protein belongs to the CoaE family.

Its subcellular location is the cytoplasm. It carries out the reaction 3'-dephospho-CoA + ATP = ADP + CoA + H(+). The protein operates within cofactor biosynthesis; coenzyme A biosynthesis; CoA from (R)-pantothenate: step 5/5. Functionally, catalyzes the phosphorylation of the 3'-hydroxyl group of dephosphocoenzyme A to form coenzyme A. In Listeria monocytogenes serovar 1/2a (strain ATCC BAA-679 / EGD-e), this protein is Dephospho-CoA kinase.